The following is a 639-amino-acid chain: ADP-ribosylation factor-binding protein GGA1 (639 aa).

An N-acetylmethionine modification is found at Met1. The 131-residue stretch at 17–147 (ATNPLNKELD…MLKKQGIVKS (131 aa)) folds into the VHS domain. Positions 114–274 (KILELLYSWT…RLASDTEDND (161 aa)) are interaction with ARF3. The GAT domain occupies 171 to 299 (DEEKSKMLAR…VINLYKQLVR (129 aa)). Ser185 bears the Phosphoserine mark. The segment at 300–509 (GEEVNGDATA…ITVPLESIKP (210 aa)) is unstructured hinge. Disordered stretches follow at residues 320-421 (LDLS…SGLD) and 434-492 (SLPP…QPVP). Ser355 is subject to Phosphoserine; by CK2. The Autoinhibitory motif lies at 358–362 (DDELM). Polar residues predominate over residues 381–390 (GWNSFQSSDA). Ser418 is modified (phosphoserine). Positions 462-480 (SSSCSSPSSSATSLLHTVS) are enriched in low complexity. Residues 481-490 (PEPPRPPQQP) show a composition bias toward pro residues. Residues 510–631 (SNILPVTVYD…NEMGDVDQFP (122 aa)) form the GAE domain.

The protein belongs to the GGA protein family. In terms of assembly, monomer. Interacts with GGA2 and GGA3. Binds to clathrin and activated ARFs, including ARF1, ARF5 and ARF6. Interacts with RABEP1. Interacts with RABGEF1. Interacts with the type-I membrane proteins LRP3, M6PR/CD-MPR and IGF2R/CI-MPR. Interacts (via N-terminal VHS domain) with SORL1/sorLA and SORT1 (via C-terminal cytosolic domain). Interacts with EPN4. Interacts with CCDC91. Interacts with HEATR5B/p200a. Interacts with SYNRG/gamma-synergin. Interacts (via GAE doamin) with NECAP1 and NECAP2. Interacts (via GAE domain) with AFTPH/aftiphilin. Interacts with TSG101 and UBC. Interacts with RNF11. Interacts (via VHS domain) with BACE1 (via DXXLL motif); the interaction highly increases when BACE1 is phosphorylated at 'Ser-498'. Interacts with CNST. Interacts with ADRA2B. Interacts with ARL3; the interaction recruits, in collaboration with RABEP1, PKD1:PKD2 complex to trans-Golgi network and is required for ciliary targeting. In terms of processing, phosphorylated by CK2 and dephosphorylated by PP2A. Phosphorylation of GGA1 allows the internal DXXLL motif to bind the VHS domain and to inhibit the recognition of cargo signals. Ubiquitinated. In terms of tissue distribution, ubiquitously expressed.

It localises to the golgi apparatus. The protein resides in the trans-Golgi network membrane. The protein localises to the endosome membrane. It is found in the early endosome membrane. In terms of biological role, plays a role in protein sorting and trafficking between the trans-Golgi network (TGN) and endosomes. Mediates the ARF-dependent recruitment of clathrin to the TGN and binds ubiquitinated proteins and membrane cargo molecules with a cytosolic acidic cluster-dileucine (DXXLL) motif. Mediates export of the GPCR receptor ADRA2B to the cell surface. Required for targeting PKD1:PKD2 complex from the trans-Golgi network to the cilium membrane. Regulates retrograde transport of proteins such as phosphorylated form of BACE1 from endosomes to the trans-Golgi network. This chain is ADP-ribosylation factor-binding protein GGA1 (GGA1), found in Homo sapiens (Human).